The primary structure comprises 992 residues: Probable RNA-dependent RNA polymerase 3 (992 aa).

Positions 88–113 are disordered; the sequence is PRLSPGESPVQSPRTPAKKSCRASQD.

This sequence belongs to the RdRP family.

The catalysed reaction is RNA(n) + a ribonucleoside 5'-triphosphate = RNA(n+1) + diphosphate. In terms of biological role, probably involved in the RNA silencing pathway and required for the generation of small interfering RNAs (siRNAs). The protein is Probable RNA-dependent RNA polymerase 3 (RDR3) of Arabidopsis thaliana (Mouse-ear cress).